Consider the following 380-residue polypeptide: MPGKEIVDASNEPCRRCKASSVLVVRSEPLCHDCFARYIHTKCIKRLETFRVNFTAEQQPRVLVPLSFGISSVTLLHVLDLHQRTQKSKTGRTGFNISAVYIEDPEQSIMAEDLLDQVREQYSGHQYASLPLHDVFRLVQDDASIRSLVPETQYASTPEEKLVHMINSLTSATARADVLSTLKTRLIVEHAKLTGCESILWGDSTTRLAQKTLSETAKGRGFSLPWQVSDGPSPFGLNFHYPLRDVLKKELVSYMNMAETGLKTLVHETSIGATQASTSSKNTTIDDLMKQYFESVEDNFPSIVANVVRTASRLEAQPDALSEPKCSLCSMPVSGGRFGIHGWGGDQQDGDDFGSTHANRTICYGCTRSVPKATSSTNGN.

This sequence belongs to the CTU2/NCS2 family.

The protein resides in the cytoplasm. It participates in tRNA modification; 5-methoxycarbonylmethyl-2-thiouridine-tRNA biosynthesis. Plays a central role in 2-thiolation of mcm(5)S(2)U at tRNA wobble positions of tRNA(Lys), tRNA(Glu) and tRNA(Gln). May act by forming a heterodimer with ncs6 that ligates sulfur from thiocarboxylated urm1 onto the uridine of tRNAs at wobble position. Prior mcm(5) tRNA modification by the elongator complex is required for 2-thiolation. May also be involved in protein urmylation. The sequence is that of Cytoplasmic tRNA 2-thiolation protein 2 (ncs2) from Pyrenophora tritici-repentis (strain Pt-1C-BFP) (Wheat tan spot fungus).